The chain runs to 598 residues: F-box/WD repeat-containing protein 8 (598 aa).

Methionine 1 is subject to N-acetylmethionine. The disordered stretch occupies residues 17–93 (LAQAQAPKKR…RSPLAREGAG (77 aa)). Over residues 29–40 (PEAAERRARRPE) the composition is skewed to basic and acidic residues. The segment covering 61–71 (EGAGRPPAARA) has biased composition (low complexity). 2 positions are modified to phosphoserine: serine 83 and serine 85. The region spanning 113–159 (PFFDIQLPYELAINIFQYLDRKELGRCAQVSKTWKVIAEDEVLWYRL) is the F-box domain. WD repeat units follow at residues 201 to 250 (AVSE…LESE), 259 to 299 (QPNV…FEHD), 300 to 340 (ARIQ…AEFE), 341 to 383 (VPKL…LLYA), 384 to 429 (HGPP…LKLG), 430 to 475 (NVLR…SAHQ), 476 to 513 (LRVS…EVYS), and 514 to 561 (GHPV…AYEF).

As to quaternary structure, component of the Cul7-RING(FBXW8) complex consisting of CUL7, RBX1, SKP1 and FBXW8; within the complex interacts with CUL7 and SKP1. Interacts with GLMN isoform 1. Interacts with OBSL1, CUL1, CUL2, CCT6B, PFDN5, CCT2, CCT3, CCT6A, CCT7, VBP1, CCDC8, ARF1, TRIP13, PDCD5 and GORASP1. Interacts with MAP4K1/HPK1 (when autophosphorylated). Associated component of the 3M complex. Interacts with POUF51 (when phosphorylated on 'Ser-355'). Post-translationally, phosphorylation at Ser-85 by mTORC2 promotes FBXW8 stabilization, allowing its translocation to the cytosol in response to insulin.

The protein localises to the cytoplasm. It localises to the perinuclear region. Its subcellular location is the golgi apparatus. It participates in protein modification; protein ubiquitination. In terms of biological role, substrate-recognition component of the Cul7-RING(FBXW8) ubiquitin ligase complex, which mediates the ubiquitination and subsequent proteasomal degradation of target proteins. The Cul7-RING(FBXW8) complex mediates ubiquitination and consequent degradation of GORASP1, acting as a component of the ubiquitin ligase pathway that regulates Golgi morphogenesis and dendrite patterning in brain. Mediates ubiquitination and degradation of IRS1 in a mTOR-dependent manner: the Cul7-RING(FBXW8) complex recognizes and binds IRS1 previously phosphorylated by S6 kinase (RPS6KB1 or RPS6KB2). The Cul7-RING(FBXW8) complex also mediates ubiquitination of MAP4K1/HPK1: recognizes and binds autophosphorylated MAP4K1/HPK1, leading to its degradation, thereby affecting cell proliferation and differentiation. The Cul7-RING(FBXW8) complex also mediates ubiquitination of phosphorylated cyclin-D1 (CCND1). The Cul7-RING(FBXW8) complex is however not a major regulator of CCND1 stability during the G1/S transition. Associated component of the 3M complex, suggesting that it mediates some of 3M complex functions. The sequence is that of F-box/WD repeat-containing protein 8 from Homo sapiens (Human).